The chain runs to 211 residues: Outer-membrane lipoprotein carrier protein (211 aa).

The N-terminal stretch at 1–24 is a signal peptide; it reads MNTIKILIGLLGIFLFSLSGIVSA.

This sequence belongs to the LolA family. In terms of assembly, monomer.

The protein resides in the periplasm. In terms of biological role, participates in the translocation of lipoproteins from the inner membrane to the outer membrane. Only forms a complex with a lipoprotein if the residue after the N-terminal Cys is not an aspartate (The Asp acts as a targeting signal to indicate that the lipoprotein should stay in the inner membrane). The polypeptide is Outer-membrane lipoprotein carrier protein (Coxiella burnetii (strain CbuK_Q154) (Coxiella burnetii (strain Q154))).